Here is a 947-residue protein sequence, read N- to C-terminus: Ionotropic receptor 25a (947 aa).

A signal peptide spans 1 to 30; it reads MILMNPKTSKILWLLGFLSLLSSFSLEIAA. Residues 31 to 562 lie on the Extracellular side of the membrane; the sequence is QTTQNINVLF…SLFKFLTVLE (532 aa). Residues Asn-78, Asn-177, Asn-277, and Asn-434 are each glycosylated (N-linked (GlcNAc...) asparagine). Residues 563 to 583 form a helical membrane-spanning segment; that stretch reads TNVWLCILAAYFFTSFLMWIF. At 584–641 the chain is on the cytoplasmic side; it reads DRWSPYSYQNNREKYKDDEEKREFNLKECLWFCMTSLTPQGGGEAPKNLSGRLVAATW. A helical transmembrane segment spans residues 642–662; that stretch reads WLFGFIIIASYTANLAAFLTV. Residues 663–858 are Extracellular-facing; the sequence is SRLDTPVESL…DQSDGISIQN (196 aa). 3 N-linked (GlcNAc...) asparagine glycosylation sites follow: Asn-687, Asn-715, and Asn-762. Residues 859–879 form a helical membrane-spanning segment; the sequence is IGGVFIVIFVGIGMACITLVF. Residues 880 to 947 are Cytoplasmic-facing; the sequence is EYWWYRYRKN…QYPATFKPRF (68 aa).

It belongs to the glutamate-gated ion channel (TC 1.A.10.1) family. As to quaternary structure, interacts with nocte. As to expression, in the antenna, detected in neurons of the arista and also detected in sacculus neurons which innervate the first and second chambers (at protein level). Throughout the main body of the antenna, expressed in neurons which innervate the coeloconic class of olfactory sensilla (at protein level). Expressed in multiple cells of the dorsal organ including the dorsal organ cool cells (at protein level). Detected in femur and retina. Expressed in a subset of femur chordonotal neurons and antennal Johnston's Organ neurons.

The protein localises to the cell membrane. It is found in the cell projection. It localises to the axon. Its subcellular location is the dendrite. The protein resides in the perikaryon. The protein localises to the cilium. In terms of biological role, integral part of various neural sensory systems in the antenna that provide the neural basis for the response to environmental changes in temperature (thermosensation), humidity (hygrosensation) and odor detection. Required for odor-evoked electrophysiological responses in multiple neuron classes in the antenna and is likely to function as part of an olfactory receptor complex with Ir76a and Ir76b. Together with Ir21a and Ir93a, mediates the response of the larval dorsal organ cool cells, a trio of cool-responsive neurons, to cooling and is required for cool avoidance behavior. Required in chordonotal organ neurons for behavioral synchronization to low-amplitude temperature cycles and mediates circadian clock resetting by temperature. Together with Ir40a and Ir93a, mediates the response of the hydrosensory sacculus neurons to changes in relative humidity, and is required for dry detection and humidiy preference behavior. This is Ionotropic receptor 25a from Drosophila melanogaster (Fruit fly).